Reading from the N-terminus, the 80-residue chain is DNA-binding protein HU-like (80 aa).

Belongs to the bacterial histone-like protein family.

In terms of biological role, histone-like DNA-binding protein which is capable of wrapping DNA to stabilize it, and thus to prevent its denaturation under extreme environmental conditions. The sequence is that of DNA-binding protein HU-like from Rickettsia conorii (strain ATCC VR-613 / Malish 7).